Here is an 83-residue protein sequence, read N- to C-terminus: Alpha-neurotoxin NTX-3 (83 aa).

Positions 1–21 (MKTLLLTLLVVTIVCLDLGYT) are cleaved as a signal peptide. 4 cysteine pairs are disulfide-bonded: cysteine 24–cysteine 45, cysteine 38–cysteine 62, cysteine 64–cysteine 75, and cysteine 76–cysteine 81.

This sequence belongs to the three-finger toxin family. Short-chain subfamily. Type I alpha-neurotoxin sub-subfamily. In terms of tissue distribution, expressed by the venom gland.

The protein localises to the secreted. Binds to muscle nicotinic acetylcholine receptor (nAChR) and inhibit acetylcholine from binding to the receptor, thereby impairing neuromuscular transmission. In Naja sputatrix (Malayan spitting cobra), this protein is Alpha-neurotoxin NTX-3.